Consider the following 551-residue polypeptide: Putative hydroxymethylpyrimidine/phosphomethylpyrimidine kinase 2 (551 aa).

4-amino-5-hydroxymethyl-2-methylpyrimidine is bound at residue Glu-76.

The protein in the N-terminal section; belongs to the ThiD family. This sequence in the C-terminal section; belongs to the thiaminase-2 family.

It localises to the cytoplasm. It carries out the reaction 4-amino-5-hydroxymethyl-2-methylpyrimidine + ATP = 4-amino-2-methyl-5-(phosphooxymethyl)pyrimidine + ADP + H(+). The catalysed reaction is 4-amino-2-methyl-5-(phosphooxymethyl)pyrimidine + ATP = 4-amino-2-methyl-5-(diphosphooxymethyl)pyrimidine + ADP. The protein operates within cofactor biosynthesis; thiamine diphosphate biosynthesis; 4-amino-2-methyl-5-diphosphomethylpyrimidine from 5-amino-1-(5-phospho-D-ribosyl)imidazole: step 2/3. It functions in the pathway cofactor biosynthesis; thiamine diphosphate biosynthesis; 4-amino-2-methyl-5-diphosphomethylpyrimidine from 5-amino-1-(5-phospho-D-ribosyl)imidazole: step 3/3. Catalyzes the phosphorylation of hydroxymethylpyrimidine phosphate (HMP-P) to HMP-PP, and of HMP to HMP-P. The polypeptide is Putative hydroxymethylpyrimidine/phosphomethylpyrimidine kinase 2 (Schizosaccharomyces pombe (strain 972 / ATCC 24843) (Fission yeast)).